We begin with the raw amino-acid sequence, 362 residues long: Chorismate synthase (362 aa).

Residues R48 and R54 each contribute to the NADP(+) site. FMN-binding positions include 125–127, 238–239, G278, 293–297, and R319; these read RSS, NA, and KPTSS.

This sequence belongs to the chorismate synthase family. In terms of assembly, homotetramer. FMNH2 is required as a cofactor.

The catalysed reaction is 5-O-(1-carboxyvinyl)-3-phosphoshikimate = chorismate + phosphate. It functions in the pathway metabolic intermediate biosynthesis; chorismate biosynthesis; chorismate from D-erythrose 4-phosphate and phosphoenolpyruvate: step 7/7. In terms of biological role, catalyzes the anti-1,4-elimination of the C-3 phosphate and the C-6 proR hydrogen from 5-enolpyruvylshikimate-3-phosphate (EPSP) to yield chorismate, which is the branch point compound that serves as the starting substrate for the three terminal pathways of aromatic amino acid biosynthesis. This reaction introduces a second double bond into the aromatic ring system. The chain is Chorismate synthase from Psychromonas ingrahamii (strain DSM 17664 / CCUG 51855 / 37).